A 363-amino-acid chain; its full sequence is Protein LEG1 homolog (363 aa).

Positions 1-19 (MQCVWTLSLLQLVALWANA) are cleaved as a signal peptide. Residues asparagine 79, asparagine 261, and asparagine 292 are each glycosylated (N-linked (GlcNAc...) asparagine).

It belongs to the LEG1 family.

Its subcellular location is the secreted. Its function is as follows. May be involved in early liver development. This chain is Protein LEG1 homolog, found in Oncorhynchus mykiss (Rainbow trout).